The following is a 225-amino-acid chain: MPEIVKTLSFDETEIKFTGDGKQGIFEGYASVFNNTDSDGDIILPGAFKNALANQTRKVAMFFNHKTWELPVGKWDSLAEDEKGLYVRGQLTPGHSGAADLKAAMQHGTVEGMSVGFSVAKDDYTIIPTGRIFKNIQALREISVCTFPANEQAGIAAMKSVDGIETIRDVENWLRDSVGLTKSQAVGLIARFKSAIRSESEGDGNEAQINALLQSIKSFPSNLGK.

Active-site residues include H65, S114, and E141.

Belongs to the HK97 prohead protease protein family. Post-translationally, cleaves itself autocatalytically to yield the mature form of the protease.

It localises to the virion. Protease involved in virion assembly and maturation. The chain is Prohead protease (4) from Escherichia coli (Bacteriophage HK97).